Reading from the N-terminus, the 94-residue chain is MFQKQQRIGLVIYLYYNRDARKVIKYGDLYYHSRRSRYLVIYINKEDMEEKLKDISRLTFVKEVKVSAFDDIDCDFVGNLHREPLEPQALPEQG.

It belongs to the UPF0298 family.

It is found in the cytoplasm. The sequence is that of UPF0298 protein SZO_03600 from Streptococcus equi subsp. zooepidemicus (strain H70).